Consider the following 107-residue polypeptide: U1-lycotoxin-Ls1o (107 aa).

An N-terminal signal peptide occupies residues 1 to 20 (MMKVLVVVALLVTLISYSSS). A propeptide spanning residues 21–41 (EGIDDLEADELLSLMANEQTR) is cleaved from the precursor. Intrachain disulfides connect cysteine 44/cysteine 59, cysteine 51/cysteine 68, cysteine 58/cysteine 86, and cysteine 70/cysteine 84.

It belongs to the neurotoxin 19 (CSTX) family. 04 (U1-Lctx) subfamily. In terms of tissue distribution, expressed by the venom gland.

It is found in the secreted. The protein is U1-lycotoxin-Ls1o of Lycosa singoriensis (Wolf spider).